Reading from the N-terminus, the 344-residue chain is Arginine N-succinyltransferase (344 aa).

Leu125 lines the succinyl-CoA pocket. The active-site Proton donor is the His229.

It belongs to the arginine N-succinyltransferase family.

It carries out the reaction succinyl-CoA + L-arginine = N(2)-succinyl-L-arginine + CoA + H(+). It participates in amino-acid degradation; L-arginine degradation via AST pathway; L-glutamate and succinate from L-arginine: step 1/5. Catalyzes the transfer of succinyl-CoA to arginine to produce N(2)-succinylarginine. This Escherichia coli (strain 55989 / EAEC) protein is Arginine N-succinyltransferase.